The chain runs to 177 residues: Peptide methionine sulfoxide reductase MsrA (177 aa).

Cys15 is a catalytic residue.

Belongs to the MsrA Met sulfoxide reductase family.

It catalyses the reaction L-methionyl-[protein] + [thioredoxin]-disulfide + H2O = L-methionyl-(S)-S-oxide-[protein] + [thioredoxin]-dithiol. It carries out the reaction [thioredoxin]-disulfide + L-methionine + H2O = L-methionine (S)-S-oxide + [thioredoxin]-dithiol. Functionally, has an important function as a repair enzyme for proteins that have been inactivated by oxidation. Catalyzes the reversible oxidation-reduction of methionine sulfoxide in proteins to methionine. In Listeria monocytogenes serotype 4b (strain CLIP80459), this protein is Peptide methionine sulfoxide reductase MsrA.